Reading from the N-terminus, the 130-residue chain is DNA-directed RNA polymerase subunit omega (130 aa).

The segment at 110 to 130 (EELLKGLEGLAPPEEQPEEDE) is disordered.

Belongs to the RNA polymerase subunit omega family. The RNAP catalytic core consists of 2 alpha, 1 beta, 1 beta' and 1 omega subunit. When a sigma factor is associated with the core the holoenzyme is formed, which can initiate transcription.

It catalyses the reaction RNA(n) + a ribonucleoside 5'-triphosphate = RNA(n+1) + diphosphate. Functionally, promotes RNA polymerase assembly. Latches the N- and C-terminal regions of the beta' subunit thereby facilitating its interaction with the beta and alpha subunits. The sequence is that of DNA-directed RNA polymerase subunit omega from Rhodopseudomonas palustris (strain HaA2).